Consider the following 503-residue polypeptide: Probable cytosol aminopeptidase (503 aa).

Residues K270 and D275 each coordinate Mn(2+). K282 is a catalytic residue. Mn(2+) is bound by residues D293, D352, and E354. R356 is a catalytic residue.

The protein belongs to the peptidase M17 family. The cofactor is Mn(2+).

The protein resides in the cytoplasm. The catalysed reaction is Release of an N-terminal amino acid, Xaa-|-Yaa-, in which Xaa is preferably Leu, but may be other amino acids including Pro although not Arg or Lys, and Yaa may be Pro. Amino acid amides and methyl esters are also readily hydrolyzed, but rates on arylamides are exceedingly low.. It carries out the reaction Release of an N-terminal amino acid, preferentially leucine, but not glutamic or aspartic acids.. Presumably involved in the processing and regular turnover of intracellular proteins. Catalyzes the removal of unsubstituted N-terminal amino acids from various peptides. The chain is Probable cytosol aminopeptidase from Serratia proteamaculans (strain 568).